Consider the following 394-residue polypeptide: S-adenosylmethionine synthase (394 aa).

ATP is bound at residue His18. Residue Asp20 participates in Mg(2+) binding. Glu46 is a K(+) binding site. Positions 59 and 104 each coordinate L-methionine. Residues 104–114 are flexible loop; that stretch reads QSPDIAQGVDA. Residues 174-176, 240-241, Asp249, 255-256, Ala272, and Lys276 contribute to the ATP site; these read DCK, KF, and RK. Asp249 contacts L-methionine. Lys280 contacts L-methionine.

Belongs to the AdoMet synthase family. As to quaternary structure, homotetramer; dimer of dimers. Mg(2+) is required as a cofactor. The cofactor is K(+).

The protein localises to the cytoplasm. It catalyses the reaction L-methionine + ATP + H2O = S-adenosyl-L-methionine + phosphate + diphosphate. It participates in amino-acid biosynthesis; S-adenosyl-L-methionine biosynthesis; S-adenosyl-L-methionine from L-methionine: step 1/1. Catalyzes the formation of S-adenosylmethionine (AdoMet) from methionine and ATP. The overall synthetic reaction is composed of two sequential steps, AdoMet formation and the subsequent tripolyphosphate hydrolysis which occurs prior to release of AdoMet from the enzyme. This Akkermansia muciniphila (strain ATCC BAA-835 / DSM 22959 / JCM 33894 / BCRC 81048 / CCUG 64013 / CIP 107961 / Muc) protein is S-adenosylmethionine synthase.